We begin with the raw amino-acid sequence, 131 residues long: CDGSH iron-sulfur domain-containing protein 2 homolog (131 aa).

At 1–35 the chain is on the lumenal side; it reads MQSLSHAVKTSLPNYLSSLPVPDSVGGWFKLSFKD. The chain crosses the membrane as a helical span at residues 36–58; it reads WLALIPPTAVVVGIGYISYQALC. Over 59–131 the chain is Cytoplasmic; that stretch reads PAAQRKSCSG…NVGPVVIKRN (73 aa). The [2Fe-2S] cluster site is built by cysteine 97, cysteine 99, cysteine 108, and histidine 112.

This sequence belongs to the CISD protein family. CISD2 subfamily. [2Fe-2S] cluster serves as cofactor.

Its subcellular location is the endoplasmic reticulum membrane. The sequence is that of CDGSH iron-sulfur domain-containing protein 2 homolog from Drosophila mojavensis (Fruit fly).